The primary structure comprises 218 residues: Glutathione S-transferase class-mu 26 kDa isozyme 51 (218 aa).

The region spanning 2–83 is the GST N-terminal domain; that stretch reads PAKLGYWKIR…YIADKHGMLG (82 aa). Residues 7-8, 41-45, 54-55, and 67-68 contribute to the glutathione site; these read YW, WFGDK, NL, and QS. A GST C-terminal domain is found at 85–203; the sequence is TPEERARISM…ESEKFIKWPL (119 aa). Tyr-111 contributes to the substrate binding site.

This sequence belongs to the GST superfamily. Mu family. Homodimer.

Its subcellular location is the cytoplasm. The enzyme catalyses RX + glutathione = an S-substituted glutathione + a halide anion + H(+). Functionally, conjugation of reduced glutathione to a wide number of exogenous and endogenous hydrophobic electrophiles. Its function is as follows. GST isoenzymes appear to play a central role in the parasite detoxification system. Other functions are also suspected including a role in increasing the solubility of haematin in the parasite gut. In Fasciola hepatica (Liver fluke), this protein is Glutathione S-transferase class-mu 26 kDa isozyme 51.